The chain runs to 302 residues: Glycine--tRNA ligase alpha subunit (302 aa).

The protein belongs to the class-II aminoacyl-tRNA synthetase family. Tetramer of two alpha and two beta subunits.

The protein localises to the cytoplasm. The enzyme catalyses tRNA(Gly) + glycine + ATP = glycyl-tRNA(Gly) + AMP + diphosphate. The protein is Glycine--tRNA ligase alpha subunit of Edwardsiella ictaluri (strain 93-146).